The sequence spans 222 residues: TPR repeat-containing protein BH2049 (222 aa).

TPR repeat units follow at residues Ala-34 to His-67 and Pro-169 to Lys-202.

The polypeptide is TPR repeat-containing protein BH2049 (Halalkalibacterium halodurans (strain ATCC BAA-125 / DSM 18197 / FERM 7344 / JCM 9153 / C-125) (Bacillus halodurans)).